The chain runs to 138 residues: Probable glycine cleavage system H protein 1 (138 aa).

Positions 30 to 112 constitute a Lipoyl-binding domain; sequence IATVGITDYA…YGRGWIFKLK (83 aa). An N6-lipoyllysine modification is found at lysine 71.

It belongs to the GcvH family. In terms of assembly, the glycine cleavage system is composed of four proteins: P, T, L and H. Requires (R)-lipoate as cofactor.

Its function is as follows. The glycine cleavage system catalyzes the degradation of glycine. The H protein shuttles the methylamine group of glycine from the P protein to the T protein. The chain is Probable glycine cleavage system H protein 1 from Sulfolobus acidocaldarius (strain ATCC 33909 / DSM 639 / JCM 8929 / NBRC 15157 / NCIMB 11770).